We begin with the raw amino-acid sequence, 346 residues long: Dihydroorotate dehydrogenase (quinone) (346 aa).

Residues 62-66 (AGMDK) and Thr-86 contribute to the FMN site. Lys-66 contacts substrate. 111–115 (NRMGF) is a binding site for substrate. Residues Asn-142 and Asn-175 each coordinate FMN. A substrate-binding site is contributed by Asn-175. Residue Ser-178 is the Nucleophile of the active site. Asn-180 contacts substrate. Residues Lys-211 and Val-239 each coordinate FMN. Residue 240-241 (NT) participates in substrate binding. FMN is bound by residues Gly-261, Gly-289, and 310–311 (YT).

This sequence belongs to the dihydroorotate dehydrogenase family. Type 2 subfamily. As to quaternary structure, monomer. It depends on FMN as a cofactor.

It is found in the cell membrane. It catalyses the reaction (S)-dihydroorotate + a quinone = orotate + a quinol. It functions in the pathway pyrimidine metabolism; UMP biosynthesis via de novo pathway; orotate from (S)-dihydroorotate (quinone route): step 1/1. Catalyzes the conversion of dihydroorotate to orotate with quinone as electron acceptor. This Thermus thermophilus (strain ATCC BAA-163 / DSM 7039 / HB27) protein is Dihydroorotate dehydrogenase (quinone).